Here is a 312-residue protein sequence, read N- to C-terminus: Malate dehydrogenase (312 aa).

NAD(+) is bound by residues 12–17 (GSGFTG) and aspartate 36. Substrate is bound by residues arginine 87 and arginine 93. NAD(+) contacts are provided by residues asparagine 100 and 123-125 (LTN). Position 125 (asparagine 125) interacts with substrate. Serine 149 bears the Phosphoserine mark. Arginine 156 is a substrate binding site. The Proton acceptor role is filled by histidine 180.

Belongs to the LDH/MDH superfamily. MDH type 3 family.

It catalyses the reaction (S)-malate + NAD(+) = oxaloacetate + NADH + H(+). In terms of biological role, catalyzes the reversible oxidation of malate to oxaloacetate. The sequence is that of Malate dehydrogenase from Oceanobacillus iheyensis (strain DSM 14371 / CIP 107618 / JCM 11309 / KCTC 3954 / HTE831).